We begin with the raw amino-acid sequence, 245 residues long: Flavin mononucleotide hydrolase 1, chloroplatic (245 aa).

Residues 1 to 26 (MAAAAMHTSAEFINLKPNMWKKNPVR) constitute a chloroplast transit peptide.

The protein belongs to the HAD-like hydrolase superfamily. DOG/GPP family. Homodimer. The cofactor is Mg(2+).

The protein resides in the plastid. Its subcellular location is the chloroplast stroma. The enzyme catalyses FMN + H2O = riboflavin + phosphate. It carries out the reaction 5-amino-6-(5-phospho-D-ribitylamino)uracil + H2O = 5-amino-6-(D-ribitylamino)uracil + phosphate. In terms of biological role, FMN hydrolase that catalyzes the dephosphorylation of flavin mononucleotide (FMN) to riboflavin. Can also dephosphorylate 5-amino-6-(5-phospho-D-ribitylamino)uracil, also known as ARPP. Not required for riboflavin biosynthesis in planta, but may help maintaining flavin homeostasis within chloroplasts. The chain is Flavin mononucleotide hydrolase 1, chloroplatic from Arabidopsis thaliana (Mouse-ear cress).